Reading from the N-terminus, the 306-residue chain is Pantothenate kinase (306 aa).

90–97 (GSVAVGKS) provides a ligand contact to ATP.

Belongs to the prokaryotic pantothenate kinase family.

It localises to the cytoplasm. It carries out the reaction (R)-pantothenate + ATP = (R)-4'-phosphopantothenate + ADP + H(+). It participates in cofactor biosynthesis; coenzyme A biosynthesis; CoA from (R)-pantothenate: step 1/5. This is Pantothenate kinase from Listeria welshimeri serovar 6b (strain ATCC 35897 / DSM 20650 / CCUG 15529 / CIP 8149 / NCTC 11857 / SLCC 5334 / V8).